Consider the following 217-residue polypeptide: uncharacterized protein (217 aa).

Helical transmembrane passes span 4-23 (IYGI…GKET), 44-66 (NVVI…LTWV), 76-98 (TVET…SIII), 111-128 (FLYL…IHAI), 132-154 (MAMV…PLAL), 166-188 (AGTA…IVLF), and 198-215 (LLLS…ALQL).

The protein resides in the cell membrane. This is an uncharacterized protein from Archaeoglobus fulgidus (strain ATCC 49558 / DSM 4304 / JCM 9628 / NBRC 100126 / VC-16).